A 211-amino-acid chain; its full sequence is MREIMNKELLKKVIELKSNGLTIGEIAEELNVSMETARYLVLNAEKLLKEEEKAIKLENVDIFIDWKNIGSSANRLKYISSIIVDILKSRNIEFDTVVGVSTSGVPIATLVASELGKELTIYIPKKHISEEGKKITGSISQNFSAVNYKRAVIIDDVVTSGSTLKECIKQLKEVCSPKLVVVLIDKSGLDEIEGVPLIPLIRIGAVNVEQK.

This sequence belongs to the purine/pyrimidine phosphoribosyltransferase family. GfcR subfamily.

This is Transcriptional regulator GfcR from Methanocaldococcus jannaschii (strain ATCC 43067 / DSM 2661 / JAL-1 / JCM 10045 / NBRC 100440) (Methanococcus jannaschii).